Here is a 209-residue protein sequence, read N- to C-terminus: Uridine kinase (209 aa).

ATP is bound at residue 12 to 19 (GGSASGKT).

The protein belongs to the uridine kinase family.

The protein localises to the cytoplasm. The enzyme catalyses uridine + ATP = UMP + ADP + H(+). It carries out the reaction cytidine + ATP = CMP + ADP + H(+). The protein operates within pyrimidine metabolism; CTP biosynthesis via salvage pathway; CTP from cytidine: step 1/3. Its pathway is pyrimidine metabolism; UMP biosynthesis via salvage pathway; UMP from uridine: step 1/1. The polypeptide is Uridine kinase (Chloroflexus aurantiacus (strain ATCC 29366 / DSM 635 / J-10-fl)).